The following is a 327-amino-acid chain: Undecaprenyl-phosphate 4-deoxy-4-formamido-L-arabinose transferase (327 aa).

Over 1–235 (MFDAAPIKKV…TCLTTTPLRL (235 aa)) the chain is Cytoplasmic. A helical transmembrane segment spans residues 236–256 (LSLLGSVIAIGGFSLSVLLIV). Residues 257–269 (LRLALGPQWAAEG) are Periplasmic-facing. The helical transmembrane segment at 270–290 (VFMLFAVLFTFIGAQFIGMGL) threads the bilayer. At 291 to 327 (LGEYIGRIYNDVRARPRYFVQQVIYPESTPFTEESHQ) the chain is on the cytoplasmic side.

The protein belongs to the glycosyltransferase 2 family.

Its subcellular location is the cell inner membrane. It carries out the reaction UDP-4-deoxy-4-formamido-beta-L-arabinose + di-trans,octa-cis-undecaprenyl phosphate = 4-deoxy-4-formamido-alpha-L-arabinopyranosyl di-trans,octa-cis-undecaprenyl phosphate + UDP. The protein operates within glycolipid biosynthesis; 4-amino-4-deoxy-alpha-L-arabinose undecaprenyl phosphate biosynthesis; 4-amino-4-deoxy-alpha-L-arabinose undecaprenyl phosphate from UDP-4-deoxy-4-formamido-beta-L-arabinose and undecaprenyl phosphate: step 1/2. It functions in the pathway bacterial outer membrane biogenesis; lipopolysaccharide biosynthesis. Catalyzes the transfer of 4-deoxy-4-formamido-L-arabinose from UDP to undecaprenyl phosphate. The modified arabinose is attached to lipid A and is required for resistance to polymyxin and cationic antimicrobial peptides. The protein is Undecaprenyl-phosphate 4-deoxy-4-formamido-L-arabinose transferase of Salmonella dublin (strain CT_02021853).